We begin with the raw amino-acid sequence, 1108 residues long: AP-3 complex subunit beta (1108 aa).

HEAT repeat units lie at residues 90-127, 327-363, 397-433, and 434-471; these read DSALLSINTIQKSLNDQSQVIRASALRVMSSIRVIDII, IEAQKVGKSLVRILRSGPEVQYITLTNISTMVTLRPS, ENIGKILKEFKEYVKNEDKKFVAATIQAIGSCASTVP, and DVTESCIYGLMSLLSNQSTVVVAESVIVLKRLLQLNAT. Residues 480 to 490 show a composition bias toward basic and acidic residues; that stretch reads KEKEKEKDVKE. Disordered stretches follow at residues 480 to 501, 736 to 797, and 811 to 835; these read KEKEKEKDVKENQSTISKHSSS, DEEE…YDGE, and LFGITNDDNNQTANGIGGGGSGEEE. Composition is skewed to acidic residues over residues 736-764 and 780-797; these read DEEEEDEEEYDEEEEEEEYEEQNEYEDFF and YDEDEYNQDIDDGEYDGE.

The protein belongs to the adaptor complexes large subunit family. In terms of assembly, adaptor protein complex 3 (AP-3) is a heterotetramer composed of two large adaptins (delta-type subunit and beta-type subunit), a medium adaptin (mu-type subunit) and a small adaptin (sigma-type subunit).

Its subcellular location is the endosome membrane. Functionally, part of the AP-3 complex, an adaptor-related complex which is essential for the compartmentalization of the endocytic pathway. This Dictyostelium discoideum (Social amoeba) protein is AP-3 complex subunit beta (ap3b-1).